A 391-amino-acid polypeptide reads, in one-letter code: Phosphoglycerate kinase (391 aa).

Substrate-binding positions include 21 to 23, R36, 59 to 62, R113, and R146; these read DLN and HLGR. Residues K197, E319, and 345–348 contribute to the ATP site; that span reads GGDT.

Belongs to the phosphoglycerate kinase family. Monomer.

The protein localises to the cytoplasm. It catalyses the reaction (2R)-3-phosphoglycerate + ATP = (2R)-3-phospho-glyceroyl phosphate + ADP. It participates in carbohydrate degradation; glycolysis; pyruvate from D-glyceraldehyde 3-phosphate: step 2/5. This Shewanella baltica (strain OS195) protein is Phosphoglycerate kinase.